The following is a 94-amino-acid chain: DNA-directed RNA polymerase subunit Rpo11 (94 aa).

This sequence belongs to the archaeal Rpo11/eukaryotic RPB11/RPC19 RNA polymerase subunit family. In terms of assembly, part of the RNA polymerase complex.

Its subcellular location is the cytoplasm. The catalysed reaction is RNA(n) + a ribonucleoside 5'-triphosphate = RNA(n+1) + diphosphate. Functionally, DNA-dependent RNA polymerase (RNAP) catalyzes the transcription of DNA into RNA using the four ribonucleoside triphosphates as substrates. This is DNA-directed RNA polymerase subunit Rpo11 from Halobacterium salinarum (strain ATCC 700922 / JCM 11081 / NRC-1) (Halobacterium halobium).